Here is a 154-residue protein sequence, read N- to C-terminus: Myoglobin (154 aa).

Residues 2–148 (VLSDGEWQLV…FRKDIAAKYK (147 aa)) form the Globin domain. S4 bears the Phosphoserine mark. H65 contacts nitrite. H65 serves as a coordination point for O2. T68 carries the phosphothreonine modification. H94 contributes to the heme b binding site.

This sequence belongs to the globin family. As to quaternary structure, monomeric.

The protein resides in the cytoplasm. It is found in the sarcoplasm. The enzyme catalyses Fe(III)-heme b-[protein] + nitric oxide + H2O = Fe(II)-heme b-[protein] + nitrite + 2 H(+). The catalysed reaction is H2O2 + AH2 = A + 2 H2O. Functionally, monomeric heme protein which primary function is to store oxygen and facilitate its diffusion within muscle tissues. Reversibly binds oxygen through a pentacoordinated heme iron and enables its timely and efficient release as needed during periods of heightened demand. Depending on the oxidative conditions of tissues and cells, and in addition to its ability to bind oxygen, it also has a nitrite reductase activity whereby it regulates the production of bioactive nitric oxide. Under stress conditions, like hypoxia and anoxia, it also protects cells against reactive oxygen species thanks to its pseudoperoxidase activity. This is Myoglobin from Balaena mysticetus (Bowhead whale).